The primary structure comprises 155 residues: uncharacterized protein (155 aa).

The region spanning 6 to 155 (LRIELGEETN…RDMVRLYLDL (150 aa)) is the N-acetyltransferase domain. CoA is bound by residues 69–71 (IAV), 77–82 (KKGFGK), and 111–117 (QLSLYQK).

In terms of biological role, probable N-acetyltransferase. This is an uncharacterized protein from Bacillus subtilis (strain 168).